Consider the following 338-residue polypeptide: Histone acetyltransferase SAS2 (338 aa).

Over residues 1-15 the composition is skewed to polar residues; it reads MARSLSQSLTATTQK. Positions 1 to 31 are disordered; the sequence is MARSLSQSLTATTQKLKGKKNGGKGKNKPSA. The span at 16–31 shows a compositional bias: basic residues; sequence LKGKKNGGKGKNKPSA. The MYST-type HAT domain maps to 45–338; it reads LNERNIRQIQ…LKDEYLLIDD (294 aa). The C2HC MYST-type zinc finger occupies 100 to 126; it reads LFVCEYCFKYTDDQTRFVGHVASCPFQ. An N6-acetyllysine; by autocatalysis modification is found at lysine 168. Residues 209–211 and 216–222 contribute to the acetyl-CoA site; these read ILI and QRRGLGL. The active-site Proton donor/acceptor is glutamate 242. Residues serine 246 and lysine 323 each coordinate acetyl-CoA.

This sequence belongs to the MYST (SAS/MOZ) family. Interacts with CAC1. Component of the SAS complex, at least composed of SAS2, SAS4 and SAS5. These three proteins constitute the core of the complex and are sufficient to acetylate histones. SAS4 is essential for HAT activity of the complex, while SAS5 is required for maxiaml HAT activity. Post-translationally, autoacetylation at Lys-168 is required for proper function.

It localises to the cytoplasm. Its subcellular location is the nucleus. The catalysed reaction is L-lysyl-[protein] + acetyl-CoA = N(6)-acetyl-L-lysyl-[protein] + CoA + H(+). Histone acetyltransferase (HAT) subunit of the SAS complex, a multiprotein complex that acetylates 'Lys-16' of histone H4 and 'Lys-14' of histone H3. The SAS complex is however unable to acetylate nucleosomal histones. The complex is involved in transcriptional silencing at telomeres and at HML locus. Also involved in rDNA silencing and G0 control. The sequence is that of Histone acetyltransferase SAS2 (SAS2) from Saccharomyces cerevisiae (strain ATCC 204508 / S288c) (Baker's yeast).